Reading from the N-terminus, the 463-residue chain is Phosphomannomutase/phosphoglucomutase (463 aa).

S108 functions as the Phosphoserine intermediate in the catalytic mechanism. Residues S108, D242, D244, and D246 each coordinate Mg(2+). Residues E325, S327, and H329 each coordinate substrate.

The protein belongs to the phosphohexose mutase family. Monomer. Mg(2+) is required as a cofactor.

The catalysed reaction is alpha-D-mannose 1-phosphate = D-mannose 6-phosphate. It carries out the reaction alpha-D-glucose 1-phosphate = alpha-D-glucose 6-phosphate. It participates in nucleotide-sugar biosynthesis; GDP-alpha-D-mannose biosynthesis; alpha-D-mannose 1-phosphate from D-fructose 6-phosphate: step 2/2. The protein operates within bacterial outer membrane biogenesis; lipopolysaccharide biosynthesis. Its function is as follows. The phosphomannomutase activity produces a precursor for alginate polymerization. The alginate layer causes a mucoid phenotype and provides a protective barrier against host immune defenses and antibiotics. Also involved in core-LPS biosynthesis due to its phosphoglucomutase activity. Essential for biofilm production. This Pseudomonas putida (strain ATCC 47054 / DSM 6125 / CFBP 8728 / NCIMB 11950 / KT2440) protein is Phosphomannomutase/phosphoglucomutase (algC).